Reading from the N-terminus, the 767-residue chain is Transient receptor potential cation channel subfamily V member 6 (767 aa).

The segment at 1 to 33 is disordered; that stretch reads MGPLQREGRPALGDANVAPGSSPGGVWHQPQPP. The Cytoplasmic portion of the chain corresponds to 1–366; sequence MGPLQREGRP…SLKWKRYGRP (366 aa). ANK repeat units follow at residues 84-114, 118-147, and 156-185; these read IWESPLLLAAKENNVQALIKLLKFEGCEVHQ, MGETALHIAALYDNLEAAMVLMEAAPELVF, and EGQTALHIAVINQNVNLVRALLARGASVSA. The segment at 133–143 is interaction with calmodulin; sequence EAAMVLMEAAP. Y201 and Y202 each carry phosphotyrosine; by SRC. 3 ANK repeats span residues 202-231, 235-276, and 278-307; these read YGEHPLSFAACVGSEEIVRLLIEHGADIRA, LGNT…LVPN, and QGLTPFKLAGVEGNIVMFQHLMQKRKHIQW. The helical transmembrane segment at 367 to 387 threads the bilayer; sequence YFCVLGAIYVLYIICFTMCCV. The Extracellular portion of the chain corresponds to 388-424; it reads YRPLKPRITNRTNPRDNTLLQQKLLQEAYVTPKDDLR. N397 carries an N-linked (GlcNAc...) asparagine glycan. The helical transmembrane segment at 425–447 threads the bilayer; that stretch reads LVGELVSIVGAVIILLVEIPDIF. Over 448 to 462 the chain is Cytoplasmic; that stretch reads RLGVTRFFGQTILGG. Residues 463 to 482 traverse the membrane as a helical segment; the sequence is PFHVIIVTYAFMVLVTMVMR. At 483–488 the chain is on the extracellular side; it reads LTNSDG. The chain crosses the membrane as a helical span at residues 489–508; that stretch reads EVVPMSFALVLGWCNVMYFA. The Cytoplasmic portion of the chain corresponds to 509–528; it reads RGFQMLGPFTIMIQKMIFGD. Residues 529 to 551 traverse the membrane as a helical segment; sequence LMRFCWLMAVVILGFASAFYIIF. The Extracellular segment spans residues 552 to 564; the sequence is QTEDPDELGHFYD. An intramembrane region (pore-forming) is located at residues 565 to 584; that stretch reads YPMALFSTFELFLTIIDGPA. Residues 580–584 carry the Selectivity filter motif; that stretch reads IDGPA. A Ca(2+)-binding site is contributed by D581. Topologically, residues 585–595 are extracellular; it reads NYDVDLPFMYS. Residues 596 to 616 form a helical membrane-spanning segment; the sequence is ITYAAFAIIATLLMLNLLIAM. The Cytoplasmic portion of the chain corresponds to 617 to 767; sequence MGDTHWRVAH…EDGEGWEYQI (151 aa). An interaction with S100A10 region spans residues 637-641; the sequence is VATTV. An interaction with calmodulin region spans residues 689-707; sequence AFQQQDDLYSEDLEKDSGE.

The protein belongs to the transient receptor (TC 1.A.4) family. TrpV subfamily. TRPV6 sub-subfamily. As to quaternary structure, homotetramer. Probably also forms heterotetramers with TRPV5. Interacts with TRPV5. Interacts with S100A10 and probably with the ANAX2-S100A10 heterotetramer. The interaction with S100A10 is required for the trafficking to the plasma membrane. Interacts with calmodulin. Interacts with BSPRY. Interacts with TCAF1 and TCAF2. In terms of processing, glycosylated. Phosphorylation at Tyr-201 and Tyr-202 by SRC leads to an increased calcium influx through the channel. Probably dephosphorylated at these sites by PTPN1. Expressed in duodenum, proximal jejunum, cecum, and colon.

It is found in the cell membrane. The catalysed reaction is Ca(2+)(in) = Ca(2+)(out). Its function is as follows. Calcium selective cation channel that mediates Ca(2+) uptake in various tissues, including the intestine. Important for normal Ca(2+) ion homeostasis in the body, including bone and skin. The channel is activated by low internal calcium level, probably including intracellular calcium store depletion, and the current exhibits an inward rectification. Inactivation includes both a rapid Ca(2+)-dependent and a slower Ca(2+)-calmodulin-dependent mechanism; the latter may be regulated by phosphorylation. In vitro, is slowly inhibited by Mg(2+) in a voltage-independent manner. Heteromeric assembly with TRPV5 seems to modify channel properties. TRPV5-TRPV6 heteromultimeric concatemers exhibit voltage-dependent gating. This Rattus norvegicus (Rat) protein is Transient receptor potential cation channel subfamily V member 6 (Trpv6).